Here is a 228-residue protein sequence, read N- to C-terminus: ATP-dependent dethiobiotin synthetase BioD 1 (228 aa).

13-18 (EVGKTV) serves as a coordination point for ATP. T17 provides a ligand contact to Mg(2+). K38 is a catalytic residue. S42 lines the substrate pocket. ATP contacts are provided by residues D55, 116-119 (EGAG), 176-177 (ND), and 205-207 (PWL). Positions 55 and 116 each coordinate Mg(2+).

This sequence belongs to the dethiobiotin synthetase family. Homodimer. It depends on Mg(2+) as a cofactor.

It is found in the cytoplasm. It carries out the reaction (7R,8S)-7,8-diammoniononanoate + CO2 + ATP = (4R,5S)-dethiobiotin + ADP + phosphate + 3 H(+). The protein operates within cofactor biosynthesis; biotin biosynthesis; biotin from 7,8-diaminononanoate: step 1/2. Functionally, catalyzes a mechanistically unusual reaction, the ATP-dependent insertion of CO2 between the N7 and N8 nitrogen atoms of 7,8-diaminopelargonic acid (DAPA, also called 7,8-diammoniononanoate) to form a ureido ring. In Salmonella typhi, this protein is ATP-dependent dethiobiotin synthetase BioD 1.